The primary structure comprises 1035 residues: MECADYFIGSGRRCSPSTSTSTSREAWRPEKQWRKATNVIRGCHRLLRLGVLSAAAGIMRRNPSYVEIKVHDEGELDVSSGGDGEAPVAFTVAADDESFKGLVKNKREDCFRLLGGGAGVAAVLASGAERGIRGDDADVARRKKAFGSNTYPKPKPKGFFRHVWDALADVFLIVLLVCAAVSLAFGIKEHGIKDGWYDGVSIFLAVFLVAAVSAVSNHSQGKRFDKLARESENIMVSVVRAARRQEVSIFDVVVGDVVVLKIGDVVPADGVFLDGHALQVDESSMTGEPHPVEVDAVKSPFLASGVKVVDGYGKMVVTAVGTDTAWGEMMRTITRENTDPTPLQERLEGLTSSIGKVGIAVAVLVFAVLTARHFTGSTRDEQGNALFDKRNVTFNAVFSGLVGIFQQAVTIIVVAIPEGLPLAVTLTLAFSMKRMVRENALVRRLSACETMGSVTAICTDKTGTLTLNQMKVTEFWVGADRPRSAAAVNGGVVRLLCQGAGLNTTGSVYKPDNVSPPEITGSPTEKALLSWAVEELPMDADALKRKCKVVRVEAFNSDKKRSGVMLRDAATGAVTAHWKGAAEMVLARCTVYVGADGAARELGVEQRRKLEQVINDMAAASLRCIAFAYKQVVDGGDSDNAKIDDEGLTLLGFVGLKDPCRPEVKSAIEACTKAGIAVKMVTGDNVLTARAIAKECGIISGNDDDAAGVVIEGHEFRAMSEQEQLAIVDNIRVMARSLPLDKLVLVQRLKQKGHVVAVTGDGTNDAPALKEADVGLSMGVQGTEVAKESSDIVILNDNFDTVVTATRWGRCVYNNIQKFIQFQLTVNVAALVINFVSAVTTGRMPLTTVQLLWVNLIMDTMGALALATDTPTAGLMRRPPIGRAAPLISNAMWRNLAAQAAYQVAVLLALQYRGFGGAGAGERANGTMIFNAFVLCQVFNEFNAREIERRNVFAGVHRNRMFLGIVAVTVALQVVMVELLTKFAGTERLGWGQWGACVGIAAVSWPIGWAVKCIPVPERPFHEIITARRRRRRST.

Topologically, residues methionine 1–alanine 166 are cytoplasmic. The chain crosses the membrane as a helical span at residues leucine 167–isoleucine 187. The Extracellular portion of the chain corresponds to lysine 188–aspartate 194. A helical membrane pass occupies residues glycine 195–valine 215. Over serine 216–glutamate 348 the chain is Cytoplasmic. Residues glycine 349–leucine 369 traverse the membrane as a helical segment. Residues threonine 370–asparagine 395 lie on the Extracellular side of the membrane. A glycan (N-linked (GlcNAc...) asparagine) is linked at asparagine 391. Residues alanine 396–isoleucine 416 form a helical membrane-spanning segment. At proline 417 to lysine 818 the chain is on the cytoplasmic side. Aspartate 460 acts as the 4-aspartylphosphate intermediate in catalysis. The Mg(2+) site is built by aspartate 761 and aspartate 765. The chain crosses the membrane as a helical span at residues phenylalanine 819–valine 839. Residues threonine 840–proline 845 are Extracellular-facing. Residues leucine 846–leucine 866 form a helical membrane-spanning segment. The Cytoplasmic portion of the chain corresponds to alanine 867–leucine 887. A helical membrane pass occupies residues isoleucine 888–leucine 910. Residues glutamine 911–glycine 919 lie on the Extracellular side of the membrane. A helical membrane pass occupies residues alanine 920 to asparagine 940. The Cytoplasmic segment spans residues glutamate 941 to arginine 960. A helical membrane pass occupies residues methionine 961–threonine 981. At lysine 982–glycine 990 the chain is on the extracellular side. Residues tryptophan 991–valine 1011 form a helical membrane-spanning segment. The Cytoplasmic segment spans residues lysine 1012–threonine 1035.

The protein belongs to the cation transport ATPase (P-type) (TC 3.A.3) family. Type IIB subfamily.

Its subcellular location is the golgi apparatus membrane. It carries out the reaction Ca(2+)(in) + ATP + H2O = Ca(2+)(out) + ADP + phosphate + H(+). Activated by calmodulin. Functionally, this magnesium-dependent enzyme catalyzes the hydrolysis of ATP coupled with the translocation of calcium from the cytosol out of the cell, into the endoplasmic reticulum, or into organelles. Involved in salt stress tolerance. The protein is Calcium-transporting ATPase 7, plasma membrane-type of Oryza sativa subsp. japonica (Rice).